The sequence spans 1334 residues: Nck-associated protein 5-like (1334 aa).

Disordered stretches follow at residues 1-28, 115-146, 210-234, 266-316, and 349-711; these read MSEA…MEPG, LPQI…APLP, TPWR…GPPQ, GEED…SPDT, and PLNG…MVPS. Residues 1–139 are mediates interaction with CDK5RAP2 and is required for homodimerization and microtubule bundle formation; it reads MSEAMDQPAG…PASPSLSSTE (139 aa). The stretch at 28-106 forms a coiled coil; sequence GTCQELLHRL…NQMLSALFQQ (79 aa). Pro residues predominate over residues 122 to 132; the sequence is PLQPPSEPPAS. Polar residues predominate over residues 358 to 372; the sequence is GQSSSPDQAPPQLSK. Phosphoserine; by CDK1 is present on residues Ser440, Ser451, Ser470, and Ser477. The segment covering 468–481 has biased composition (low complexity); that stretch reads SPSPGGPQLSPQLP. The (S/T)X(I/L)P motif 1 signature appears at 484 to 487; sequence SRIP. Ser493, Ser496, and Ser498 each carry phosphoserine. Residues 519-547 are compositionally biased toward polar residues; it reads LPTSPSPCYTTPDSTQLRPPQSALSTTLS. 2 positions are modified to phosphoserine; by CDK1: Ser571 and Ser577. Residues 638–649 show a composition bias toward polar residues; sequence PGNSSKKPSQGS. Phosphothreonine is present on Thr659. The tract at residues 750 to 1146 is mediates interaction with beta-tubulin and is required for microtubule bundle formation; the sequence is RVYSSHSMGA…SGTPSKNLPK (397 aa). At Ser767 the chain carries Phosphoserine; by CDK1. A disordered region spans residues 782 to 884; it reads LAGALCPQVP…EGLAPHSAIE (103 aa). Residues 810 to 825 show a composition bias toward low complexity; it reads SPHSSPTKLPSKSPTK. The short motif at 816–819 is the (S/T)X(I/L)P motif 2 element; it reads TKLP. The short motif at 926 to 929 is the (S/T)X(I/L)P motif 3; required for interaction with MAPRE1 element; sequence SKLP. 3 disordered regions span residues 931–953, 986–1015, and 1030–1183; these read LNRR…LRRE, KAYL…QGQL, and LNRV…VPGI. Basic and acidic residues predominate over residues 933–942; sequence RRTEATKNKE. Positions 956–994 form a coiled coil; the sequence is MEARKLEAESLNISKLMAKAEDLRRALEEEKAYLSSRAR. Residues 1033–1050 show a composition bias toward basic and acidic residues; it reads VDGKELPSKSWREPKPEY. Residues 1079–1090 are compositionally biased toward low complexity; the sequence is GCGKPPGKPSSE. Residues 1110-1122 show a composition bias toward polar residues; it reads SHFTACGSLTRTL. The segment covering 1152–1167 has biased composition (pro residues); sequence LDPPPGVPPARPPPLT. A Phosphoserine modification is found at Ser1194. Positions 1197–1206 are enriched in low complexity; that stretch reads AFPALLPAAP. The disordered stretch occupies residues 1197–1334; that stretch reads AFPALLPAAP…DSLSSCGSQG (138 aa). The span at 1235 to 1247 shows a compositional bias: polar residues; that stretch reads TFPNTRAAGSSSD. The span at 1313-1334 shows a compositional bias: low complexity; it reads LETSESLSDSLYDSLSSCGSQG.

In terms of assembly, homodimer. Interacts with CDK5RAP2. Interacts with MAPRE1. Interacts with beta-tubulin. Post-translationally, CDK1/Cyclin B-dependent phosphorylation mediates its dissociation from centrosomes during mitosis.

It is found in the cytoplasm. The protein resides in the cytoskeleton. It localises to the microtubule organizing center. The protein localises to the centrosome. Functionally, regulates microtubule organization and stabilization. Promotes microtubule growth and bundling formation and stabilizes microtubules by increasing intense acetylation of microtubules. Both tubulin-binding and homodimer formation are required for NCKAP5L-mediated microtubule bundle formation. The polypeptide is Nck-associated protein 5-like (Homo sapiens (Human)).